A 178-amino-acid polypeptide reads, in one-letter code: ATP synthase subunit delta (178 aa).

It belongs to the ATPase delta chain family. F-type ATPases have 2 components, F(1) - the catalytic core - and F(0) - the membrane proton channel. F(1) has five subunits: alpha(3), beta(3), gamma(1), delta(1), epsilon(1). F(0) has three main subunits: a(1), b(2) and c(10-14). The alpha and beta chains form an alternating ring which encloses part of the gamma chain. F(1) is attached to F(0) by a central stalk formed by the gamma and epsilon chains, while a peripheral stalk is formed by the delta and b chains.

The protein localises to the cell inner membrane. In terms of biological role, f(1)F(0) ATP synthase produces ATP from ADP in the presence of a proton or sodium gradient. F-type ATPases consist of two structural domains, F(1) containing the extramembraneous catalytic core and F(0) containing the membrane proton channel, linked together by a central stalk and a peripheral stalk. During catalysis, ATP synthesis in the catalytic domain of F(1) is coupled via a rotary mechanism of the central stalk subunits to proton translocation. Its function is as follows. This protein is part of the stalk that links CF(0) to CF(1). It either transmits conformational changes from CF(0) to CF(1) or is implicated in proton conduction. This is ATP synthase subunit delta from Nitrosomonas eutropha (strain DSM 101675 / C91 / Nm57).